Here is a 213-residue protein sequence, read N- to C-terminus: 3-isopropylmalate dehydratase small subunit (213 aa).

The protein belongs to the LeuD family. LeuD type 1 subfamily. As to quaternary structure, heterodimer of LeuC and LeuD.

The catalysed reaction is (2R,3S)-3-isopropylmalate = (2S)-2-isopropylmalate. Its pathway is amino-acid biosynthesis; L-leucine biosynthesis; L-leucine from 3-methyl-2-oxobutanoate: step 2/4. Its function is as follows. Catalyzes the isomerization between 2-isopropylmalate and 3-isopropylmalate, via the formation of 2-isopropylmaleate. This Aromatoleum aromaticum (strain DSM 19018 / LMG 30748 / EbN1) (Azoarcus sp. (strain EbN1)) protein is 3-isopropylmalate dehydratase small subunit.